The following is a 337-amino-acid chain: Glyceraldehyde-3-phosphate dehydrogenase (337 aa).

NAD(+) contacts are provided by residues arginine 12–isoleucine 13, aspartate 34, and arginine 79. Residues serine 150–threonine 152, threonine 181, threonine 210–glycine 211, and arginine 233 each bind D-glyceraldehyde 3-phosphate. The active-site Nucleophile is the cysteine 151. Asparagine 315 serves as a coordination point for NAD(+).

The protein belongs to the glyceraldehyde-3-phosphate dehydrogenase family. As to quaternary structure, homotetramer.

The protein localises to the cytoplasm. The catalysed reaction is D-glyceraldehyde 3-phosphate + phosphate + NAD(+) = (2R)-3-phospho-glyceroyl phosphate + NADH + H(+). It participates in carbohydrate degradation; glycolysis; pyruvate from D-glyceraldehyde 3-phosphate: step 1/5. This Podospora anserina (Pleurage anserina) protein is Glyceraldehyde-3-phosphate dehydrogenase (GPD).